The chain runs to 172 residues: uncharacterized protein (172 aa).

The region spanning 3 to 171 (KKVAIILADE…FNREIVKKLE (169 aa)) is the PfpI endopeptidase domain.

It belongs to the peptidase C56 family.

This is an uncharacterized protein from Staphylococcus epidermidis (strain ATCC 35984 / DSM 28319 / BCRC 17069 / CCUG 31568 / BM 3577 / RP62A).